Consider the following 525-residue polypeptide: GMP synthase [glutamine-hydrolyzing] (525 aa).

The region spanning 13–202 (TILVLDFGSQ…AVDLCHAKQN (190 aa)) is the Glutamine amidotransferase type-1 domain. Catalysis depends on Cys-89, which acts as the Nucleophile. Catalysis depends on residues His-176 and Glu-178. Positions 203–400 (WTMENFIDTE…LGIPHDLVWR (198 aa)) constitute a GMPS ATP-PPase domain. Residue 231-237 (SGGVDST) coordinates ATP. Lys-241 is covalently cross-linked (Glycyl lysine isopeptide (Lys-Gly) (interchain with G-Cter in ubiquitin)). Arg-304 is an XMP binding site. Residue Lys-426 forms a Glycyl lysine isopeptide (Lys-Gly) (interchain with G-Cter in ubiquitin) linkage. Asp-462, Lys-517, and Glu-523 together coordinate XMP.

As to quaternary structure, homodimer. Mg(2+) is required as a cofactor.

It localises to the cytoplasm. Its subcellular location is the cytosol. It carries out the reaction XMP + L-glutamine + ATP + H2O = GMP + L-glutamate + AMP + diphosphate + 2 H(+). It functions in the pathway purine metabolism; GMP biosynthesis; GMP from XMP (L-Gln route): step 1/1. In terms of biological role, catalyzes the conversion of xanthine monophosphate (XMP) to GMP in the presence of glutamine and ATP through an adenyl-XMP intermediate. The polypeptide is GMP synthase [glutamine-hydrolyzing] (Saccharomyces cerevisiae (strain ATCC 204508 / S288c) (Baker's yeast)).